A 515-amino-acid chain; its full sequence is Maturase K (515 aa).

Belongs to the intron maturase 2 family. MatK subfamily.

It is found in the plastid. Its subcellular location is the chloroplast. In terms of biological role, usually encoded in the trnK tRNA gene intron. Probably assists in splicing its own and other chloroplast group II introns. The polypeptide is Maturase K (Picea abies (Norway spruce)).